The chain runs to 987 residues: Valine--tRNA ligase (987 aa).

The 'HIGH' region motif lies at 45–55 (PNVTGSLHMGH). The 'KMSKS' region motif lies at 634 to 638 (KMSKS). An ATP-binding site is contributed by Lys-637. Positions 917-985 (VIDIGAEKAR…LSAALARLSE (69 aa)) form a coiled coil.

Belongs to the class-I aminoacyl-tRNA synthetase family. ValS type 1 subfamily. In terms of assembly, monomer.

The protein resides in the cytoplasm. The catalysed reaction is tRNA(Val) + L-valine + ATP = L-valyl-tRNA(Val) + AMP + diphosphate. Its function is as follows. Catalyzes the attachment of valine to tRNA(Val). As ValRS can inadvertently accommodate and process structurally similar amino acids such as threonine, to avoid such errors, it has a 'posttransfer' editing activity that hydrolyzes mischarged Thr-tRNA(Val) in a tRNA-dependent manner. This chain is Valine--tRNA ligase, found in Cereibacter sphaeroides (strain ATCC 17029 / ATH 2.4.9) (Rhodobacter sphaeroides).